Reading from the N-terminus, the 346-residue chain is Syntaxin UFE1 (346 aa).

Over methionine 1 to threonine 324 the chain is Cytoplasmic. Positions leucine 255–alanine 317 constitute a t-SNARE coiled-coil homology domain. The chain crosses the membrane as a helical; Anchor for type IV membrane protein span at residues alanine 325–leucine 342. Over aspartate 343 to glycine 346 the chain is Lumenal.

It belongs to the syntaxin family. In terms of assembly, component of a SNARE complex consisting of UFE1, USE1, SEC20 and SEC22 or YKT6.

The protein resides in the endoplasmic reticulum membrane. Functionally, syntaxin required for targeting and fusion of Golgi-derived retrograde transport vesicles with the ER. This Saccharomyces cerevisiae (strain ATCC 204508 / S288c) (Baker's yeast) protein is Syntaxin UFE1 (UFE1).